The primary structure comprises 451 residues: Proline--tRNA ligase (451 aa).

Belongs to the class-II aminoacyl-tRNA synthetase family. ProS type 2 subfamily. Homodimer.

It localises to the cytoplasm. It carries out the reaction tRNA(Pro) + L-proline + ATP = L-prolyl-tRNA(Pro) + AMP + diphosphate. Catalyzes the attachment of proline to tRNA(Pro) in a two-step reaction: proline is first activated by ATP to form Pro-AMP and then transferred to the acceptor end of tRNA(Pro). The chain is Proline--tRNA ligase from Roseobacter denitrificans (strain ATCC 33942 / OCh 114) (Erythrobacter sp. (strain OCh 114)).